Here is a 385-residue protein sequence, read N- to C-terminus: Spermidine/putrescine import ATP-binding protein PotA (385 aa).

Positions 6–238 constitute an ABC transporter domain; the sequence is IEFKNVSKVF…PINHFVATFI (233 aa). Position 40–47 (40–47) interacts with ATP; it reads GASGSGKS.

It belongs to the ABC transporter superfamily. Spermidine/putrescine importer (TC 3.A.1.11.1) family. As to quaternary structure, the complex is composed of two ATP-binding proteins (PotA), two transmembrane proteins (PotB and PotC) and a solute-binding protein (PotD).

It is found in the cell membrane. The enzyme catalyses ATP + H2O + polyamine-[polyamine-binding protein]Side 1 = ADP + phosphate + polyamineSide 2 + [polyamine-binding protein]Side 1.. In terms of biological role, part of the ABC transporter complex PotABCD involved in spermidine/putrescine import. Responsible for energy coupling to the transport system. This chain is Spermidine/putrescine import ATP-binding protein PotA, found in Streptococcus pneumoniae serotype 4 (strain ATCC BAA-334 / TIGR4).